The sequence spans 131 residues: Small ribosomal subunit protein bS6 (131 aa).

Residues 98–131 (EASPMVKAKDERRERRDDFANETADDAEAGDSEE) are disordered. Residues 104-116 (KAKDERRERRDDF) are compositionally biased toward basic and acidic residues. Positions 120-131 (TADDAEAGDSEE) are enriched in acidic residues.

It belongs to the bacterial ribosomal protein bS6 family.

Binds together with bS18 to 16S ribosomal RNA. The protein is Small ribosomal subunit protein bS6 of Salmonella dublin (strain CT_02021853).